Here is a 425-residue protein sequence, read N- to C-terminus: Histone-binding protein RBBP7 (425 aa).

The residue at position 2 (alanine 2) is an N-acetylalanine. Serine 3 bears the Phosphoserine mark. Position 4 is an N6-acetyllysine; alternate (lysine 4). Lysine 4 is covalently cross-linked (Glycyl lysine isopeptide (Lys-Gly) (interchain with G-Cter in SUMO2); alternate). Lysine 4 is covalently cross-linked (Glycyl lysine isopeptide (Lys-Gly) (interchain with G-Cter in ubiquitin); alternate). Position 10 is a phosphothreonine (threonine 10). 7 WD repeats span residues 47–122 (QWLP…KINH), 128–173 (RARY…LRLR), 181–217 (GLSWNSNLSGHLLSASDDHTVCLWDINAGPKEGKIVD), 228–269 (VVED…HLVD), 275–312 (VNCLSFNPYSEFILATGSADKTVALWDLRNLKLKLHTF), 318–369 (EIFQ…LFIH), and 376–403 (ISDFSWNPNEPWVICSVSEDNIMQIWQM). Serine 95 carries the post-translational modification Phosphoserine. Lysine 101 is covalently cross-linked (Glycyl lysine isopeptide (Lys-Gly) (interchain with G-Cter in SUMO2)). Lysine 119 carries the N6-acetyllysine modification. Residue lysine 155 forms a Glycyl lysine isopeptide (Lys-Gly) (interchain with G-Cter in SUMO2) linkage. The residue at position 159 (lysine 159) is an N6-acetyllysine; alternate. Lysine 159 participates in a covalent cross-link: Glycyl lysine isopeptide (Lys-Gly) (interchain with G-Cter in SUMO2); alternate. The residue at position 354 (serine 354) is a Phosphoserine.

The protein belongs to the WD repeat RBAP46/RBAP48/MSI1 family. Binds directly to helix 1 of the histone fold of histone H4, a region that is not accessible when H4 is in chromatin. Subunit of the type B histone acetyltransferase (HAT) complex, composed of RBBP7 and HAT1. Subunit of the core histone deacetylase (HDAC) complex, which is composed of HDAC1, HDAC2, RBBP4 and RBBP7. The core HDAC complex associates with SIN3A, ARID4B/SAP180, SAP18, SAP30, SAP130, SUDS3/SAP45 and possibly ARID4A/RBP1 and ING1 to form the SIN3 HDAC complex. Component of the nucleosome remodeling and deacetylase (NuRD) repressor complex, composed of core proteins MTA1, MTA2, MTA3, RBBP4, RBBP7, HDAC1, HDAC2, MBD2, MBD3, and peripherally associated proteins CDK2AP1, CDK2AP2, GATAD2A, GATAD2B, CHD3, CHD4 and CHD5. The exact stoichiometry of the NuRD complex is unknown, and some subunits such as MBD2 and MBD3, GATAD2A and GATAD2B, and CHD3, CHD4 and CHD5 define mutually exclusive NuRD complexes. The NuRD complex may interact with MBD3L1. The NuRD complex may interact with MBD3L2. Subunit of the PRC2/EED-EZH2 complex, which is composed of at least EED, EZH2, RBBP4, RBBP7 and SUZ12. The PRC2/EED-EZH2 complex may also associate with HDAC1. Component of the NURF-1 ISWI chromatin remodeling complex (also called the nucleosome-remodeling factor (NURF) complex) at least composed of SMARCA1, BPTF, RBBP4 and RBBP7. Within the complex interacts with SMARCA1. Component of the BPFT-SMARCA1 complex at least composed of SMARCA1, BPFT, RBBP4 and RBBP7; the complex is catalytically inactive and does not remodel chromatin. Within the complex interacts with SMARCA1. Interacts with BRCA1. Interacts with CDK2AP1. Interacts with CENPA. Interacts with CHD3. Interacts with CHD4. Interacts with CREBBP, and this interaction may be enhanced by the binding of phosphorylated CREB1 to CREBBP. Interacts with HDAC7. Interacts with MTA1. Interacts with PWWP2B. Interacts with RB1 (via viral protein-binding domain). Interacts with SUV39H1.

The protein localises to the nucleus. In terms of biological role, core histone-binding subunit that may target chromatin remodeling factors, histone acetyltransferases and histone deacetylases to their histone substrates in a manner that is regulated by nucleosomal DNA. Component of several complexes which regulate chromatin metabolism. These include the type B histone acetyltransferase (HAT) complex, which is required for chromatin assembly following DNA replication; the core histone deacetylase (HDAC) complex, which promotes histone deacetylation and consequent transcriptional repression; the nucleosome remodeling and histone deacetylase complex (the NuRD complex), which promotes transcriptional repression by histone deacetylation and nucleosome remodeling; and the PRC2/EED-EZH2 complex, which promotes repression of homeotic genes during development; and the NURF (nucleosome remodeling factor) complex. The sequence is that of Histone-binding protein RBBP7 (RBBP7) from Bos taurus (Bovine).